The following is a 396-amino-acid chain: Tryptophan synthase beta chain (396 aa).

At lysine 90 the chain carries N6-(pyridoxal phosphate)lysine.

Belongs to the TrpB family. As to quaternary structure, tetramer of two alpha and two beta chains. The cofactor is pyridoxal 5'-phosphate.

It catalyses the reaction (1S,2R)-1-C-(indol-3-yl)glycerol 3-phosphate + L-serine = D-glyceraldehyde 3-phosphate + L-tryptophan + H2O. It participates in amino-acid biosynthesis; L-tryptophan biosynthesis; L-tryptophan from chorismate: step 5/5. The beta subunit is responsible for the synthesis of L-tryptophan from indole and L-serine. This is Tryptophan synthase beta chain from Clostridium kluyveri (strain NBRC 12016).